Consider the following 494-residue polypeptide: MPGTPSLYAAIDLGSNSFHMLVVREVAGSIQTLTRVKRKVRLAAGLGADNALSADAMERGWQCLRLFAERLQDIPPSQIRVVATATLRLATNADVFVARAQEILGCPVQVIAGEEEARLIYQGVAHTTGGADRRLVVDIGGASTELVTGTGARATSLFSLPMGCVTFLERFFTDRSLTQEHFASAEQAARDILQPVIAQLRGQGWKICVGASGTVQALQEIMMAQGMDERITLAKLQQLKARAIHCGRLEELEIEGLTLERALVFPSGLAILIAIFSELEIECMTLAGGALREGLVYGMLHLAVDQDIRNRTLKNIQRRFMVDIAQAGRVAQLAERFAVSVEREWALDDLSRALLHSASLLHEVGLAVDFKRAPQHAAYLVNNLDLPGFTPAQKKLLATLLLNQTGTVDLPALQQQNAVPLRVAERLCRLLRLAIIFASRRRDDMLPDVTLTAHDDTLTASLPQDWLSVHPLGAEMLEQEQLWQSYVHWQLDVK.

Belongs to the GppA/Ppx family. GppA subfamily.

It carries out the reaction guanosine 3'-diphosphate 5'-triphosphate + H2O = guanosine 3',5'-bis(diphosphate) + phosphate + H(+). It functions in the pathway purine metabolism; ppGpp biosynthesis; ppGpp from GTP: step 2/2. In terms of biological role, catalyzes the conversion of pppGpp to ppGpp. Guanosine pentaphosphate (pppGpp) is a cytoplasmic signaling molecule which together with ppGpp controls the 'stringent response', an adaptive process that allows bacteria to respond to amino acid starvation, resulting in the coordinated regulation of numerous cellular activities. This chain is Guanosine-5'-triphosphate,3'-diphosphate pyrophosphatase, found in Cronobacter sakazakii (strain ATCC BAA-894) (Enterobacter sakazakii).